Consider the following 431-residue polypeptide: tRNA(Ile)-lysidine synthase (431 aa).

25–30 contributes to the ATP binding site; sequence SGGLDS.

It belongs to the tRNA(Ile)-lysidine synthase family.

The protein localises to the cytoplasm. The enzyme catalyses cytidine(34) in tRNA(Ile2) + L-lysine + ATP = lysidine(34) in tRNA(Ile2) + AMP + diphosphate + H(+). Ligates lysine onto the cytidine present at position 34 of the AUA codon-specific tRNA(Ile) that contains the anticodon CAU, in an ATP-dependent manner. Cytidine is converted to lysidine, thus changing the amino acid specificity of the tRNA from methionine to isoleucine. This chain is tRNA(Ile)-lysidine synthase, found in Legionella pneumophila (strain Paris).